Here is a 427-residue protein sequence, read N- to C-terminus: 3-phosphoshikimate 1-carboxyvinyltransferase (427 aa).

Positions 22, 23, and 27 each coordinate 3-phosphoshikimate. Position 22 (lysine 22) interacts with phosphoenolpyruvate. Positions 96 and 124 each coordinate phosphoenolpyruvate. 3-phosphoshikimate contacts are provided by serine 169, serine 170, glutamine 171, serine 197, aspartate 313, asparagine 336, and lysine 340. Glutamine 171 contacts phosphoenolpyruvate. The active-site Proton acceptor is the aspartate 313. Arginine 344, arginine 386, and lysine 411 together coordinate phosphoenolpyruvate.

Belongs to the EPSP synthase family. Monomer.

The protein resides in the cytoplasm. It carries out the reaction 3-phosphoshikimate + phosphoenolpyruvate = 5-O-(1-carboxyvinyl)-3-phosphoshikimate + phosphate. The protein operates within metabolic intermediate biosynthesis; chorismate biosynthesis; chorismate from D-erythrose 4-phosphate and phosphoenolpyruvate: step 6/7. Its function is as follows. Catalyzes the transfer of the enolpyruvyl moiety of phosphoenolpyruvate (PEP) to the 5-hydroxyl of shikimate-3-phosphate (S3P) to produce enolpyruvyl shikimate-3-phosphate and inorganic phosphate. The sequence is that of 3-phosphoshikimate 1-carboxyvinyltransferase from Escherichia coli O127:H6 (strain E2348/69 / EPEC).